An 873-amino-acid polypeptide reads, in one-letter code: Alanine--tRNA ligase (873 aa).

Positions 562, 566, 664, and 668 each coordinate Zn(2+).

Belongs to the class-II aminoacyl-tRNA synthetase family. It depends on Zn(2+) as a cofactor.

It localises to the cytoplasm. It carries out the reaction tRNA(Ala) + L-alanine + ATP = L-alanyl-tRNA(Ala) + AMP + diphosphate. In terms of biological role, catalyzes the attachment of alanine to tRNA(Ala) in a two-step reaction: alanine is first activated by ATP to form Ala-AMP and then transferred to the acceptor end of tRNA(Ala). Also edits incorrectly charged Ser-tRNA(Ala) and Gly-tRNA(Ala) via its editing domain. In Photobacterium profundum (strain SS9), this protein is Alanine--tRNA ligase.